A 263-amino-acid chain; its full sequence is Endonuclease 8 (263 aa).

Residue Pro2 is the Schiff-base intermediate with DNA of the active site. Residue Glu3 is the Proton donor of the active site. Catalysis depends on Lys53, which acts as the Proton donor; for beta-elimination activity. DNA contacts are provided by Gln70, Arg125, and Asn169. An FPG-type zinc finger spans residues 229–263 (KVFHRDGEACERCGGIIEKTTLSSRPFYWCPHCQK). Residue Arg253 is the Proton donor; for delta-elimination activity of the active site.

The protein belongs to the FPG family. The cofactor is Zn(2+).

It carries out the reaction 2'-deoxyribonucleotide-(2'-deoxyribose 5'-phosphate)-2'-deoxyribonucleotide-DNA = a 3'-end 2'-deoxyribonucleotide-(2,3-dehydro-2,3-deoxyribose 5'-phosphate)-DNA + a 5'-end 5'-phospho-2'-deoxyribonucleoside-DNA + H(+). Involved in base excision repair of DNA damaged by oxidation or by mutagenic agents. Acts as a DNA glycosylase that recognizes and removes damaged bases. Has a preference for oxidized pyrimidines, such as thymine glycol, 5,6-dihydrouracil and 5,6-dihydrothymine. Has AP (apurinic/apyrimidinic) lyase activity and introduces nicks in the DNA strand. Cleaves the DNA backbone by beta-delta elimination to generate a single-strand break at the site of the removed base with both 3'- and 5'-phosphates. This is Endonuclease 8 from Salmonella paratyphi A (strain AKU_12601).